Consider the following 250-residue polypeptide: L-ascorbate peroxidase 1, cytosolic (250 aa).

His-42 acts as the Proton acceptor in catalysis. Residues Val-113 to Gly-137 are disordered. His-163 lines the heme b pocket. Thr-164, Thr-180, Asn-182, and Asp-187 together coordinate K(+).

It belongs to the peroxidase family. Ascorbate peroxidase subfamily. The cofactor is heme b.

The protein localises to the cytoplasm. The enzyme catalyses L-ascorbate + H2O2 = L-dehydroascorbate + 2 H2O. Its function is as follows. Plays a key role in hydrogen peroxide removal. The polypeptide is L-ascorbate peroxidase 1, cytosolic (APX1) (Oryza sativa subsp. indica (Rice)).